A 507-amino-acid polypeptide reads, in one-letter code: ATP synthase subunit alpha, mitochondrial (507 aa).

171–178 contacts ATP; sequence GDRQTGKT.

This sequence belongs to the ATPase alpha/beta chains family. F-type ATPases have 2 components, CF(1) - the catalytic core - and CF(0) - the membrane proton channel. CF(1) has five subunits: alpha(3), beta(3), gamma(1), delta(1), epsilon(1). CF(0) has three main subunits: a, b and c.

The protein localises to the mitochondrion. Its subcellular location is the mitochondrion inner membrane. Its function is as follows. Mitochondrial membrane ATP synthase (F(1)F(0) ATP synthase or Complex V) produces ATP from ADP in the presence of a proton gradient across the membrane which is generated by electron transport complexes of the respiratory chain. F-type ATPases consist of two structural domains, F(1) - containing the extramembraneous catalytic core, and F(0) - containing the membrane proton channel, linked together by a central stalk and a peripheral stalk. During catalysis, ATP synthesis in the catalytic domain of F(1) is coupled via a rotary mechanism of the central stalk subunits to proton translocation. Subunits alpha and beta form the catalytic core in F(1). Rotation of the central stalk against the surrounding alpha(3)beta(3) subunits leads to hydrolysis of ATP in three separate catalytic sites on the beta subunits. Subunit alpha does not bear the catalytic high-affinity ATP-binding sites. This chain is ATP synthase subunit alpha, mitochondrial (ATPA), found in Arabidopsis thaliana (Mouse-ear cress).